We begin with the raw amino-acid sequence, 380 residues long: Tomoregulin-1 (380 aa).

Residues 1–39 (MGAAAAEAPLRLPAAPPLAFCCYTSVLLLFAFSLPGSRA) form the signal peptide. Topologically, residues 40–330 (SNQPPGGGGG…VPSRQKLTHV (291 aa)) are extracellular. Kazal-like domains lie at 98-145 (ACQF…PCYS) and 189-237 (VCNI…HCTD). 9 cysteine pairs are disulfide-bonded: cysteine 99-cysteine 129, cysteine 103-cysteine 122, cysteine 111-cysteine 143, cysteine 190-cysteine 221, cysteine 194-cysteine 214, cysteine 203-cysteine 235, cysteine 275-cysteine 288, cysteine 283-cysteine 299, and cysteine 301-cysteine 310. An EGF-like domain is found at 271–311 (NHMPCPENLNGYCIHGKCEFIYSTQKASCRCESGYTGQHCE). A helical transmembrane segment spans residues 331–351 (LIAAIIGAVQIAIIVAIVMCI). Residues 352 to 380 (TRKCPKNNRGRRQKQNLGHFTSDTSSRMV) lie on the Cytoplasmic side of the membrane. The interval 359-380 (NRGRRQKQNLGHFTSDTSSRMV) is disordered. Over residues 366 to 380 (QNLGHFTSDTSSRMV) the composition is skewed to polar residues.

Belongs to the tomoregulin family. In terms of assembly, may interact with ST14. Expressed predominantly in brain, and at lower levels in heart, placenta and skeletal muscle. Down-regulated in brain tumors as compared to control brain tissues.

It localises to the cell membrane. In terms of biological role, neuron-specific restriction factor that prevents herpes simplex virus 1 (HHV-1) infection in the brain by blocking viral entry. Also able to restrict herpes simplex virus 2 (HHV-2) infection, although to a lesser extent. Acts by preventing the association between the viral glycoprotein D (gD) and its cell surface receptor NECTIN1, thereby inhibiting fusion of the virus and the cell membrane. Also able to prevent the association between the viral glycoprotein B (gB) and MYH9/NMMHC-IIA and MYH10/NMMHC-IIB receptors. May be a tumor suppressor in brain cancers. The protein is Tomoregulin-1 of Homo sapiens (Human).